We begin with the raw amino-acid sequence, 692 residues long: Elongation factor G (692 aa).

One can recognise a tr-type G domain in the interval 8-283 (NRIRNIGIAA…AVIDYLPAPT (276 aa)). GTP-binding positions include 17 to 24 (AHIDAGKT), 81 to 85 (DTPGH), and 135 to 138 (NKMD).

This sequence belongs to the TRAFAC class translation factor GTPase superfamily. Classic translation factor GTPase family. EF-G/EF-2 subfamily.

It localises to the cytoplasm. In terms of biological role, catalyzes the GTP-dependent ribosomal translocation step during translation elongation. During this step, the ribosome changes from the pre-translocational (PRE) to the post-translocational (POST) state as the newly formed A-site-bound peptidyl-tRNA and P-site-bound deacylated tRNA move to the P and E sites, respectively. Catalyzes the coordinated movement of the two tRNA molecules, the mRNA and conformational changes in the ribosome. This Helicobacter acinonychis (strain Sheeba) protein is Elongation factor G.